Consider the following 370-residue polypeptide: Anhydro-N-acetylmuramic acid kinase (370 aa).

13 to 20 (GTSMDGVD) is a binding site for ATP.

The protein belongs to the anhydro-N-acetylmuramic acid kinase family.

The catalysed reaction is 1,6-anhydro-N-acetyl-beta-muramate + ATP + H2O = N-acetyl-D-muramate 6-phosphate + ADP + H(+). Its pathway is amino-sugar metabolism; 1,6-anhydro-N-acetylmuramate degradation. The protein operates within cell wall biogenesis; peptidoglycan recycling. In terms of biological role, catalyzes the specific phosphorylation of 1,6-anhydro-N-acetylmuramic acid (anhMurNAc) with the simultaneous cleavage of the 1,6-anhydro ring, generating MurNAc-6-P. Is required for the utilization of anhMurNAc either imported from the medium or derived from its own cell wall murein, and thus plays a role in cell wall recycling. The chain is Anhydro-N-acetylmuramic acid kinase from Vibrio vulnificus (strain CMCP6).